A 471-amino-acid chain; its full sequence is MTNPWIVSLLLGATLVQANLYPPAVLNLGPEVIKKHLTQALENHDATAILQELPLLRGMQDKSGSIPILDSFVNTVLRYIIWMKVTSANILQLVVQPSTYDQELVVRIPLDMVAGLNTPLIKTIVEFQMSTEVQALIRVERSKNGPARLNLSDCSSNESTLRLSLLHKLSFVVNSLAKNVMNLLMPALPQIVKSHLCPVIQQAFDDMYEDFLRLTTAPIALSPGALEFDLLSPAIQDSNILFNLKAKLLDSQARVTNWFNGSATPLMETTPDRAPFSLTVRQDLVNAIVTTLIPQEELVILLRFVIPDVARQLQMDIKEINAEAANKLGPTQMLKIFTHSTPHIVLNEGGATAAQSVVLEVFPTNTDVRPFFSLGIEASYEAQFFIAENRLMLNFNNVSIERIKLMISDIKLFDPEVLKDTLTKILEYTLLPNENGKLRTGIPMSMPKALGYEKAMWSVSKGALKLTPASS.

Positions 1-18 (MTNPWIVSLLLGATLVQA) are cleaved as a signal peptide. N-linked (GlcNAc...) asparagine glycans are attached at residues Asn-150, Asn-157, Asn-260, and Asn-397. A disulfide bridge connects residues Cys-154 and Cys-197.

This sequence belongs to the BPI/LBP/Plunc superfamily. Plunc family.

The protein resides in the secreted. In terms of biological role, may play a role in innate immunity in mouth, nose and lungs. Binds bacterial lipopolysaccharide (LPS) and modulates the cellular responses to LPS. The chain is BPI fold-containing family B member 1 (Bpifb1) from Rattus norvegicus (Rat).